The sequence spans 433 residues: Ectonucleoside triphosphate diphosphohydrolase 5 (433 aa).

A signal peptide spans Met1–Arg24. Glu172 functions as the Proton acceptor in the catalytic mechanism. N-linked (GlcNAc...) asparagine glycosylation is present at Asn232. 2 disulfide bridges follow: Cys272–Cys308 and Cys368–Cys382.

The protein belongs to the GDA1/CD39 NTPase family. Monomer; active form. Homodimer; disulfide-linked. Homodimers are enzymatically inactive. Ca(2+) serves as cofactor. Requires Mg(2+) as cofactor. In terms of processing, N-glycosylated; high-mannose type.

It is found in the endoplasmic reticulum. It localises to the secreted. It catalyses the reaction a ribonucleoside 5'-diphosphate + H2O = a ribonucleoside 5'-phosphate + phosphate + H(+). The enzyme catalyses GDP + H2O = GMP + phosphate + H(+). The catalysed reaction is UDP + H2O = UMP + phosphate + H(+). It carries out the reaction IDP + H2O = IMP + phosphate + H(+). It catalyses the reaction CDP + H2O = CMP + phosphate + H(+). The enzyme catalyses ADP + H2O = AMP + phosphate + H(+). The protein operates within protein modification; protein glycosylation. In terms of biological role, hydrolyzes nucleoside diphosphates with a preference for GDP, IDP and UDP compared to ADP and CDP. In the lumen of the endoplasmic reticulum, hydrolyzes UDP that acts as an end-product feedback inhibitor of the UDP-Glc:glycoprotein glucosyltransferases. UMP can be transported back by an UDP-sugar antiporter to the cytosol where it is consumed to regenerate UDP-glucose. Therefore, it positively regulates protein reglucosylation by clearing UDP from the ER lumen and by promoting the regeneration of UDP-glucose. Protein reglucosylation is essential to proper glycoprotein folding and quality control in the ER. The protein is Ectonucleoside triphosphate diphosphohydrolase 5 (ENTPD5) of Ailuropoda melanoleuca (Giant panda).